The chain runs to 363 residues: Lipase (363 aa).

The N-terminal stretch at Met1–Ala24 is a signal peptide. Positions Val25 to Met94 are excised as a propeptide. Residues Ser33–Leu69 are disordered. Over residues Pro43–Ala62 the composition is skewed to low complexity. Disulfide bonds link Cys123–Cys362, Cys134–Cys137, and Cys329–Cys338. The Nucleophile role is filled by Ser238. The Charge relay system role is filled by Asp297. Asp350 contributes to the Ca(2+) binding site. The active-site Charge relay system is the His351.

This sequence belongs to the AB hydrolase superfamily. Lipase family.

The enzyme catalyses a triacylglycerol + H2O = a diacylglycerol + a fatty acid + H(+). The polypeptide is Lipase (Rhizomucor miehei).